Reading from the N-terminus, the 1015-residue chain is Putative ankyrin repeat protein R96 (1015 aa).

Positions 1–14 are enriched in basic residues; it reads MSTVKKSSKKKSSK. The interval 1-37 is disordered; sequence MSTVKKSSKKKSSKKSSSGNESSKKSSPKIVPKHTAK. ANK repeat units lie at residues 136 to 165, 168 to 201, 202 to 231, 340 to 370, 374 to 403, 456 to 485, 498 to 527, and 535 to 564; these read NGHKVLKILVYENDIPSIIALVENGANIDF, APSNILHICASRNYPVLLKYALSRNEIDINAVNI, DGRSPLYLACLYLNKECIKILLDNGADVEV, LGHNAINTSIMFCNNSLIKYFVDKTDLDFQA, NITNPIQMLVNHGYIDYVETILNRNPKIVS, SGYRPIEVAIRYCSIDVIKELLKYNTTIFA, NNNDIISFATQLGRFDVVTYLIQENVQFQL, and TVPTALLIAIVYHRKNFIQFFLELPQITDC.

This is Putative ankyrin repeat protein R96 from Acanthamoeba polyphaga mimivirus (APMV).